The sequence spans 275 residues: MKEFESIINTAWENKDSINGQSDKSILDAINQTIELVDKGELRVAEKNGNEWVVNQWVKKAIMLSFRTHDMDSLSGPYSSWYDKSHLLKGKTANWTKEDHIKAGFRMVPNSPVRKGSFIGKNAVLMPCFVNIGAYVDEGTMVDTWASVGSCAQIGKNCHISGGAGIGGVLEPMQANPTIIEDNCFIGARSEIVEGVIVGEGSVLSMGVFIGQSTKIVYRETGEVIYGKIPPYSVIVPGSIPSKDGKGPALYCAVIIKQVDEKTRSKTSINDLLRD.

Substrate contacts are provided by Arg-106 and Asp-143.

Belongs to the transferase hexapeptide repeat family. As to quaternary structure, homotrimer.

Its subcellular location is the cytoplasm. It catalyses the reaction (S)-2,3,4,5-tetrahydrodipicolinate + succinyl-CoA + H2O = (S)-2-succinylamino-6-oxoheptanedioate + CoA. The protein operates within amino-acid biosynthesis; L-lysine biosynthesis via DAP pathway; LL-2,6-diaminopimelate from (S)-tetrahydrodipicolinate (succinylase route): step 1/3. In Pelagibacter ubique (strain HTCC1062), this protein is 2,3,4,5-tetrahydropyridine-2,6-dicarboxylate N-succinyltransferase.